The following is a 244-amino-acid chain: MSEPVKLRAHNQAHCKDCSLAPLCLPLSLNLEDMDALDEIVKRGRPLKKGEFLFRQGDGFDSVYAVRSGALKTFSLSDSGEEQITGFHLPSELVGLSGMDTESHPVSAQALETTSVCEIPFERLDELALQLPQLRRQLMRVMSREIRDDQQMMLLLSKKTADERIATFLVNLSARFRARGFSANQFRLSMSRNEIGNYLGLAVETVSRVFTRFQQNELIAAEGKEVHILDPIQLCALAGGSVEG.

21-149 (APLCLPLSLN…RVMSREIRDD (129 aa)) is an a nucleoside 3',5'-cyclic phosphate binding site. Positions 159–232 (KTADERIATF…GKEVHILDPI (74 aa)) constitute an HTH crp-type domain. Residues 192–211 (RNEIGNYLGLAVETVSRVFT) constitute a DNA-binding region (H-T-H motif).

Functionally, transcriptional activator of anaerobic gene expression. Regulates the expression of the components of the hydrogen cyanide synthase (HcnABC) in a positive manner. May also act as an iron sensor. The chain is Transcriptional activator protein Anr from Pseudomonas protegens (strain DSM 19095 / LMG 27888 / CFBP 6595 / CHA0).